The following is a 261-amino-acid chain: Ribosomal RNA small subunit methyltransferase J (261 aa).

S-adenosyl-L-methionine-binding positions include Arg-109–Asp-110, Glu-125–Arg-126, and Asp-179.

It belongs to the methyltransferase superfamily. RsmJ family.

Its subcellular location is the cytoplasm. It catalyses the reaction guanosine(1516) in 16S rRNA + S-adenosyl-L-methionine = N(2)-methylguanosine(1516) in 16S rRNA + S-adenosyl-L-homocysteine + H(+). Its function is as follows. Specifically methylates the guanosine in position 1516 of 16S rRNA. This is Ribosomal RNA small subunit methyltransferase J from Pseudomonas aeruginosa (strain UCBPP-PA14).